The following is a 522-amino-acid chain: Apolipoprotein N-acyltransferase (522 aa).

6 consecutive transmembrane segments (helical) span residues 17-37 (YFTY…FSPF), 61-81 (TALL…VSWL), 98-118 (FLVG…TYLV), 127-147 (VIFA…FTGF), 164-184 (IAPI…SAVI), and 197-217 (LKLV…SAYS). The CN hydrolase domain occupies 236–483 (AQGNIEQNLK…ETTLTYKIAP (248 aa)). The active-site Proton acceptor is Glu-276. Lys-342 is a catalytic residue. Cys-394 functions as the Nucleophile in the catalytic mechanism. A helical transmembrane segment spans residues 495 to 515 (NMPLYALSLLFLLLHSMMAFI).

This sequence belongs to the CN hydrolase family. Apolipoprotein N-acyltransferase subfamily.

It localises to the cell inner membrane. The enzyme catalyses N-terminal S-1,2-diacyl-sn-glyceryl-L-cysteinyl-[lipoprotein] + a glycerophospholipid = N-acyl-S-1,2-diacyl-sn-glyceryl-L-cysteinyl-[lipoprotein] + a 2-acyl-sn-glycero-3-phospholipid + H(+). Its pathway is protein modification; lipoprotein biosynthesis (N-acyl transfer). Catalyzes the phospholipid dependent N-acylation of the N-terminal cysteine of apolipoprotein, the last step in lipoprotein maturation. This is Apolipoprotein N-acyltransferase from Haemophilus influenzae (strain ATCC 51907 / DSM 11121 / KW20 / Rd).